Consider the following 126-residue polypeptide: RutC family protein y4sK (126 aa).

It belongs to the RutC family.

The polypeptide is RutC family protein y4sK (Sinorhizobium fredii (strain NBRC 101917 / NGR234)).